A 120-amino-acid polypeptide reads, in one-letter code: UPF0231 protein YacL (120 aa).

Belongs to the UPF0231 family.

In Salmonella typhi, this protein is UPF0231 protein YacL.